The sequence spans 291 residues: MEMO1 family protein PH1626 (291 aa).

It belongs to the MEMO1 family.

This Pyrococcus horikoshii (strain ATCC 700860 / DSM 12428 / JCM 9974 / NBRC 100139 / OT-3) protein is MEMO1 family protein PH1626.